The following is a 305-amino-acid chain: Protoheme IX farnesyltransferase (305 aa).

The next 9 helical transmembrane spans lie at 26–46 (VMSLVVFTAFVGLWIAPQPVN), 47–67 (PFVAFCAVLFIALGGGASGAL), 98–118 (LAVGIALSGLSVMMLGLAANW), 119–139 (FAAGFLAFTIFFYAVVYTIWL), 147–167 (IVIGGAAGAFPPMIGWACATG), 174–194 (LLMFALIFFWTPPHFWALALF), 220–240 (IFAYTLVLAPFALWLGFTSVG), 243–263 (LYLAVSVVLNALFIAGGWQIL), and 284–304 (LSLYYTFLHFLALLVQHWVGG).

The protein belongs to the UbiA prenyltransferase family. Protoheme IX farnesyltransferase subfamily. Interacts with CtaA.

It localises to the cell inner membrane. The catalysed reaction is heme b + (2E,6E)-farnesyl diphosphate + H2O = Fe(II)-heme o + diphosphate. Its pathway is porphyrin-containing compound metabolism; heme O biosynthesis; heme O from protoheme: step 1/1. Its function is as follows. Converts heme B (protoheme IX) to heme O by substitution of the vinyl group on carbon 2 of heme B porphyrin ring with a hydroxyethyl farnesyl side group. The chain is Protoheme IX farnesyltransferase from Paracoccus denitrificans (strain Pd 1222).